Consider the following 340-residue polypeptide: GTP 3',8-cyclase (340 aa).

The region spanning 8 to 227 (KLGRPIRDLR…TMIEQHFEID (220 aa)) is the Radical SAM core domain. Residue Arg-17 coordinates GTP. [4Fe-4S] cluster is bound by residues Cys-24 and Cys-28. Tyr-30 lines the S-adenosyl-L-methionine pocket. Cys-31 provides a ligand contact to [4Fe-4S] cluster. Residue Arg-71 participates in GTP binding. Gly-75 is an S-adenosyl-L-methionine binding site. Thr-102 contacts GTP. Residue Ser-126 participates in S-adenosyl-L-methionine binding. Residue Lys-163 coordinates GTP. Met-197 contributes to the S-adenosyl-L-methionine binding site. Positions 261 and 264 each coordinate [4Fe-4S] cluster. 266–268 (RAR) contacts GTP. Cys-278 contributes to the [4Fe-4S] cluster binding site.

This sequence belongs to the radical SAM superfamily. MoaA family. As to quaternary structure, monomer and homodimer. The cofactor is [4Fe-4S] cluster.

It catalyses the reaction GTP + AH2 + S-adenosyl-L-methionine = (8S)-3',8-cyclo-7,8-dihydroguanosine 5'-triphosphate + 5'-deoxyadenosine + L-methionine + A + H(+). Its pathway is cofactor biosynthesis; molybdopterin biosynthesis. Its function is as follows. Catalyzes the cyclization of GTP to (8S)-3',8-cyclo-7,8-dihydroguanosine 5'-triphosphate. This Staphylococcus aureus (strain USA300) protein is GTP 3',8-cyclase.